We begin with the raw amino-acid sequence, 657 residues long: N-acetylgalactosaminyltransferase 7 (657 aa).

The Cytoplasmic portion of the chain corresponds to 1–6; sequence MRLKIG. Residues 7 to 29 traverse the membrane as a helical; Signal-anchor for type II membrane protein segment; the sequence is FILRSLLVVGSFLGLVVLWSSLS. The interval 30 to 66 is disordered; it reads SRPDDPSPLSRMREDRDVNNPLPNRGGNGLAPGDDRF. The Lumenal segment spans residues 30-657; sequence SRPDDPSPLS…KWEMNNIHSV (628 aa). 5 disulfide bridges follow: Cys197–Cys435, Cys426–Cys507, Cys545–Cys562, Cys585–Cys600, and Cys625–Cys640. The tract at residues 206 to 317 is catalytic subdomain A; it reads LLTSSVVIVF…VNWYAPLVAP (112 aa). Substrate-binding residues include Asp247 and Arg277. Residues Asp301 and His303 each coordinate Mn(2+). The interval 381-443 is catalytic subdomain B; it reads PYRSPAMAGG…PCSRVGHIYR (63 aa). Trp412 lines the substrate pocket. Position 440 (His440) interacts with Mn(2+). Substrate is bound at residue Arg443. The 121-residue stretch at 532–652 folds into the Ricin B-type lectin domain; sequence VEWGEIRGLE…GKMTQKWEMN (121 aa).

It belongs to the glycosyltransferase 2 family. GalNAc-T subfamily. Mn(2+) is required as a cofactor. Highly expressed in sublingual gland. Expressed at lower level in stomach, small intestiine and colon.

Its subcellular location is the golgi apparatus membrane. The catalysed reaction is L-seryl-[protein] + UDP-N-acetyl-alpha-D-galactosamine = a 3-O-[N-acetyl-alpha-D-galactosaminyl]-L-seryl-[protein] + UDP + H(+). It catalyses the reaction L-threonyl-[protein] + UDP-N-acetyl-alpha-D-galactosamine = a 3-O-[N-acetyl-alpha-D-galactosaminyl]-L-threonyl-[protein] + UDP + H(+). It participates in protein modification; protein glycosylation. In terms of biological role, glycopeptide transferase involved in O-linked oligosaccharide biosynthesis, which catalyzes the transfer of an N-acetyl-D-galactosamine residue to an already glycosylated peptide. In contrast to other proteins of the family, it does not act as a peptide transferase that transfers GalNAc onto serine or threonine residue on the protein receptor, but instead requires the prior addition of a GalNAc on a peptide before adding additional GalNAc moieties. Some peptide transferase activity is however not excluded, considering that its appropriate peptide substrate may remain unidentified. This chain is N-acetylgalactosaminyltransferase 7 (Galnt7), found in Rattus norvegicus (Rat).